Here is a 208-residue protein sequence, read N- to C-terminus: Ribonuclease HII (208 aa).

The region spanning 12-201 (ELVAGVDEVG…VRALLEPVAV (190 aa)) is the RNase H type-2 domain. A divalent metal cation-binding residues include aspartate 18, glutamate 19, and aspartate 110.

It belongs to the RNase HII family. Mn(2+) serves as cofactor. It depends on Mg(2+) as a cofactor.

Its subcellular location is the cytoplasm. The enzyme catalyses Endonucleolytic cleavage to 5'-phosphomonoester.. Functionally, endonuclease that specifically degrades the RNA of RNA-DNA hybrids. This chain is Ribonuclease HII, found in Ectopseudomonas mendocina (strain ymp) (Pseudomonas mendocina).